A 222-amino-acid polypeptide reads, in one-letter code: MQNPRTVSDTKRAFYAAHTRPIHSIYRRFIEELLVEIHLLRVNVDFRYSPLFALGVVTAFDQFMEGYQPEGDRDRIFHALCVAEEMNPQQLKEDAASWQQYQGRPLSQILDELNSGQPSAPLNSLNHTGKYSRLHAVGLYAFLQELAGEVTIHLNETLDQLAPVIPLPIEKVKRDLELYRSNLDKINQARSLMKELVEQERKRRAQQTSAPPAVDASSDAPA.

Positions 169–208 (IEKVKRDLELYRSNLDKINQARSLMKELVEQERKRRAQQT) form a coiled coil. Residues 197-222 (VEQERKRRAQQTSAPPAVDASSDAPA) form a disordered region. Over residues 209–222 (SAPPAVDASSDAPA) the composition is skewed to low complexity.

It belongs to the THF1 family.

May be involved in photosynthetic membrane biogenesis. The polypeptide is Protein Thf1 (Thermosynechococcus vestitus (strain NIES-2133 / IAM M-273 / BP-1)).